The primary structure comprises 110 residues: Large ribosomal subunit protein uL22 (110 aa).

This sequence belongs to the universal ribosomal protein uL22 family. Part of the 50S ribosomal subunit.

Its function is as follows. This protein binds specifically to 23S rRNA; its binding is stimulated by other ribosomal proteins, e.g. L4, L17, and L20. It is important during the early stages of 50S assembly. It makes multiple contacts with different domains of the 23S rRNA in the assembled 50S subunit and ribosome. The globular domain of the protein is located near the polypeptide exit tunnel on the outside of the subunit, while an extended beta-hairpin is found that lines the wall of the exit tunnel in the center of the 70S ribosome. The chain is Large ribosomal subunit protein uL22 from Delftia acidovorans (strain DSM 14801 / SPH-1).